The following is a 315-amino-acid chain: MACSEFSFHMPSLEELAEVLQKGLTDNFADVQVSVVDCPDLTKEPFTFPVRGICGQTRIAEVGGVPYLLPLVNKKKVYDLNEIAKVIKLPGAFILGAGAGPFQTLGFNSEFMPIVQTASEHNQPVNGSYFAHKNPADGACLLEKYSQKYHDFGCALLANLFASEGQPGKVIEVQAKRRTGELNFVSCMRQTLEEHYGDKPVGMGGTFIVQKGKVKAHIMPAEFSSCPLNSDEAVNKWLHFYEMKAPLVCLPVFVSKDPGLDLRLEHTHFFSHHGEGGHYHYDTTPDTVEYLGYFSPAQFLYRIDQPKETHAFGRD.

Residues histidine 266, histidine 268, and histidine 278 each coordinate Zn(2+).

Monomer. Requires Zn(2+) as cofactor.

The protein localises to the nucleus. It is found in the cytoplasm. In terms of biological role, exhibits ester hydrolase activity on the substrate p-nitrophenyl acetate, in vitro. Regulates DNA damage and repair by regulating HIF1A degradation via chaperone-mediated autophagy (CMA). The protein is Ester hydrolase C11orf54 homolog of Mus musculus (Mouse).